Consider the following 101-residue polypeptide: Small ribosomal subunit protein uS14 (101 aa).

The interval 1–21 is disordered; that stretch reads MAKTSSVEKNNRRRKLADQYG.

It belongs to the universal ribosomal protein uS14 family. As to quaternary structure, part of the 30S ribosomal subunit. Contacts proteins S3 and S10.

Binds 16S rRNA, required for the assembly of 30S particles and may also be responsible for determining the conformation of the 16S rRNA at the A site. This is Small ribosomal subunit protein uS14 from Mesorhizobium japonicum (strain LMG 29417 / CECT 9101 / MAFF 303099) (Mesorhizobium loti (strain MAFF 303099)).